The sequence spans 241 residues: Probable transcriptional regulatory protein lin1570 (241 aa).

Polar residues predominate over residues 1–14 (MAGHSKWNNIQGRK). Residues 1–22 (MAGHSKWNNIQGRKNAQDSKRS) are disordered.

Belongs to the TACO1 family.

Its subcellular location is the cytoplasm. The chain is Probable transcriptional regulatory protein lin1570 from Listeria innocua serovar 6a (strain ATCC BAA-680 / CLIP 11262).